A 435-amino-acid chain; its full sequence is GTPase Obg (435 aa).

The 159-residue stretch at 1–159 (MAFIDKCKIV…VEVLLELKTI (159 aa)) folds into the Obg domain. In terms of domain architecture, OBG-type G spans 160–329 (ADIGIIGLPN…MLDDVIKIYF (170 aa)). Residues 166-173 (GLPNAGKS), 191-195 (FTTLN), 212-215 (DIPG), 282-285 (NKID), and 310-312 (SAL) contribute to the GTP site. Residues Ser-173 and Thr-193 each coordinate Mg(2+). The 79-residue stretch at 357–435 (KSKELDKTIE…IYDITLEFEE (79 aa)) folds into the OCT domain.

It belongs to the TRAFAC class OBG-HflX-like GTPase superfamily. OBG GTPase family. In terms of assembly, monomer. Mg(2+) is required as a cofactor.

The protein resides in the cytoplasm. Its function is as follows. An essential GTPase which binds GTP, GDP and possibly (p)ppGpp with moderate affinity, with high nucleotide exchange rates and a fairly low GTP hydrolysis rate. Plays a role in control of the cell cycle, stress response, ribosome biogenesis and in those bacteria that undergo differentiation, in morphogenesis control. The protein is GTPase Obg of Ureaplasma parvum serovar 3 (strain ATCC 27815 / 27 / NCTC 11736).